The chain runs to 142 residues: uncharacterized protein (142 aa).

The segment covering 1-14 (MKNVSPRRNKHYKS) has biased composition (basic residues). The disordered stretch occupies residues 1–40 (MKNVSPRRNKHYKSYKPQVPLKKPVLLPQHPPYRNRRKKK). The span at 16–28 (KPQVPLKKPVLLP) shows a compositional bias: low complexity.

This is an uncharacterized protein from Aquifex aeolicus (strain VF5).